Here is a 1367-residue protein sequence, read N- to C-terminus: MTLEQELRQLSKAKARAQRNGQLCEEAVCCHQLGELLASHGRFQEALEEHQQELHLLESVQDTLGCAVAHRKIGERLAEMENYSAALKHQHLYLDLAGSLSNHTELQRAWATIGRTHLDVYDHCQSRDSLLQAQAAFEKSLAIVDEKLEGMLTQRELSEMRTRLYLNLGLTCESLQQTAQCNNYFKKSIFLAEQNHLYEDLFRARYNLGAIHWRGGQHSQAMRCLEGARECARAMKMRFMESECCMLVSQVLQDLGDFLAAKRALKKAYRLGSQKPNQRVAICQSLKYVLAVVRLQQQLQEAEGNDLQGAMAICEQLGDLFSKADDFPKASEAYQKQLHFAELLNRPDLELAVIHESLATTLGDMKDYHKAVHHYEEELRLRKGNALEEAKTWFNIGLAREEAGDAYELLAPCFQKAFGCAQQAQRYQLQRQILQHLYTVQLKLQPQEARDTEIRLQELSMAKDTEEEEEEEEEEEEEASEALETSEMELSESEDDADGLSQQLEEEEELQGCVGRRKINKWNRRNDMGETLLHRACIEGQLRRVQDLVKQGHPLNPRDYCGWTPLHEACNYGHLEIVRFLLDHGAAVDDPGGQGCDGITPLHDALNCGHFEVAELLIERGASVTLRTRKGLSPLETLQQWVKLYFRDLDLETRQKAASMERRLQMASSGQASHSSPALQTIPNNHLFDPETSPPSSPCPKPPSYTPRPPEASPAPAKVFLEETVSAVCRPRKNRHRPASSSSSSEDDDDNTNPCRPSQKRLRHSTQQGEAKTPDPSKSRETAISSACRAAYQAAIRGVGSAQSRRLVPSLPRGSNEVPAPKTALIPEEEFLAEEWLEVDTPLTRSSSSSRPSTSISDYERCPARPRTRAKQSRPASLDGWCTRTKAADASLTAEPTENSSMPRTTGPNKENCAAGQPLLLVQPPPIRVRVQIQDNLFLIPVPHSDVHSVAWLAEQAAQRYFQTCGLLPRLTLRKDGALLAPQDPIPDVLQSNDEVMAEVTSWDLPPLKDRYRRACQSLGQGEHQQVLQAMEHQSSSPSFSACSLALCQAQLTPLLRALKLHTALRELRLSGNRLGDPCATELLATLGTMPNLVLLDLSSNHLGPEGLRQLVEGSLGQTAFQNVEELDLSMNPLGDGCAQALASLLRTCPVLRTLRLQACGFSPSFFLSHQAALGSAFKDAEHLKTLSLSYNTLGAPALARVLQSLPTCTLLHLELSSVAASKSNSSLIEPVIKYLTKEGCALAHLTLSANCLSDKAVRELSRCLPSCPSLTSLDLSANPEVSCAGLEELLSALQERPQGLSFFDLSGCSIQGPLNSDLWDKILSQLQELQLCSKDLTTKDRDTLCQRLPAGACTLNQGSKLFFKCL.

9 TPR repeats span residues 27–60 (AVCC…LESV), 67–100 (AVAH…AGSL), 107–147 (QRAW…VDEK), 162–195 (TRLY…AEQN), 202–235 (FRAR…ARAM), 242–275 (SECC…GSQK), 311–344 (MAIC…AELL), 352–385 (AVIH…RKGN), and 390–424 (AKTW…AQQA). The segment at 460-509 (SMAKDTEEEEEEEEEEEEEASEALETSEMELSESEDDADGLSQQLEEEEE) is disordered. Over residues 465–509 (TEEEEEEEEEEEEEASEALETSEMELSESEDDADGLSQQLEEEEE) the composition is skewed to acidic residues. 3 ANK repeats span residues 528 to 557 (MGET…PLNP), 561 to 590 (CGWT…AVDD), and 597 to 626 (DGIT…SVTL). 2 disordered regions span residues 660 to 714 (MERR…EASP) and 726 to 785 (SAVC…TAIS). A compositionally biased stretch (polar residues) spans 666–684 (MASSGQASHSSPALQTIPN). The span at 692–713 (TSPPSSPCPKPPSYTPRPPEAS) shows a compositional bias: pro residues. Residues 772–781 (KTPDPSKSRE) show a composition bias toward basic and acidic residues. Arg797 carries the post-translational modification Omega-N-methylarginine. Disordered regions lie at residues 798-820 (GVGS…EVPA) and 841-910 (TPLT…GPNK). Low complexity predominate over residues 844-857 (TRSSSSSRPSTSIS). Positions 894-909 (AEPTENSSMPRTTGPN) are enriched in polar residues. LRR repeat units follow at residues 1062–1086 (HTAL…LLAT), 1090–1118 (MPNL…SLGQ), 1121–1144 (FQNV…ALAS), 1181–1205 (AEHL…VLQS), 1240–1263 (GCAL…ELSR), 1268–1293 (CPSL…LLSA), and 1324–1347 (LSQL…TLCQ).

This sequence belongs to the Tonsoku family. Component of the MMS22L-TONSL complex, a complex at least composed of MMS22L and TONSL/NFKBIL2. Interacts with the MCM complex, the FACT complex and the RPA complex. Interacts with MCM5; the interaction is direct. Binds histones, with a strong preference for histone H3.1 (histones H3.1 and H3-4/H3.1t). Interacts (via ANK repeats) with histone H4; specifically binds histone H4 lacking methylation at 'Lys-20' (H4K20me0). May interact with DNAJC9; the interaction seems to be histone-dependent.

Its subcellular location is the nucleus. The protein localises to the chromosome. The protein resides in the cytoplasm. Component of the MMS22L-TONSL complex, a complex that promotes homologous recombination-mediated repair of double-strand breaks (DSBs) at stalled or collapsed replication forks. The MMS22L-TONSL complex is required to maintain genome integrity during DNA replication. It mediates the assembly of RAD51 filaments on single-stranded DNA (ssDNA): the MMS22L-TONSL complex is recruited to DSBs following histone replacement by histone chaperones and eviction of the replication protein A complex (RPA/RP-A) from DSBs. Following recruitment to DSBs, the TONSL-MMS22L complex promotes recruitment of RAD51 filaments and subsequent homologous recombination. Within the complex, TONSL acts as a histone reader, which recognizes and binds newly synthesized histones following their replacement by histone chaperones. Specifically binds histone H4 lacking methylation at 'Lys-20' (H4K20me0) and histone H3.1. This chain is Tonsoku-like protein, found in Rattus norvegicus (Rat).